Here is a 97-residue protein sequence, read N- to C-terminus: YcgL domain-containing protein PFL_1496 (97 aa).

Residues 3–87 form the YcgL domain; the sequence is RICSIYKSPR…AEDEYIEHLP (85 aa).

The sequence is that of YcgL domain-containing protein PFL_1496 from Pseudomonas fluorescens (strain ATCC BAA-477 / NRRL B-23932 / Pf-5).